Consider the following 243-residue polypeptide: Derlin-1.2 (243 aa).

The Cytoplasmic segment spans residues 1-20 (MSSPAEYYKSLPPISKAYGT). The chain crosses the membrane as a helical span at residues 21-41 (LCFFTTVLVRLHILNPLFLYL). Topologically, residues 42–54 (YYPRVFKKFEVWR) are lumenal. Residues 55–75 (IFTSFFFLGPFSINFGIRLLM) traverse the membrane as a helical segment. The Cytoplasmic segment spans residues 76-94 (IARYGVMLEKGAFDKRTAD). A helical membrane pass occupies residues 95 to 115 (FLWMMIFGAISLLVLSVIPQL). The Lumenal portion of the chain corresponds to 116-155 (NTYVLGLPMVSMLVYVWSRENPNAQINIYGILQLKAFYLP). The helical transmembrane segment at 156–176 (WVMLLLDVIFGSPLMPGLLGI) threads the bilayer. Residues 177-243 (MVGHLYYYFA…FRGRSYRLNQ (67 aa)) lie on the Cytoplasmic side of the membrane.

This sequence belongs to the derlin family. Expressed in roots and endosperm.

The protein localises to the endoplasmic reticulum membrane. In terms of biological role, may be involved in the degradation process of specific misfolded endoplasmic reticulum (ER) luminal proteins. The chain is Derlin-1.2 (DER1.2) from Zea mays (Maize).